The primary structure comprises 710 residues: Polyribonucleotide nucleotidyltransferase (710 aa).

Residues aspartate 487 and aspartate 493 each contribute to the Mg(2+) site. The region spanning 554–613 is the KH domain; that stretch reads PKIITMTINPDKIRDVIGPSGKQINKIIEETGVKIDIEQDGTVFISSIDQQMNEKAKKII. Residues 623–691 form the S1 motif domain; that stretch reads GEIYLGKVKR…KQGRVNLSRK (69 aa).

The protein belongs to the polyribonucleotide nucleotidyltransferase family. Mg(2+) serves as cofactor.

The protein localises to the cytoplasm. It carries out the reaction RNA(n+1) + phosphate = RNA(n) + a ribonucleoside 5'-diphosphate. Functionally, involved in mRNA degradation. Catalyzes the phosphorolysis of single-stranded polyribonucleotides processively in the 3'- to 5'-direction. This Bacillus cytotoxicus (strain DSM 22905 / CIP 110041 / 391-98 / NVH 391-98) protein is Polyribonucleotide nucleotidyltransferase.